We begin with the raw amino-acid sequence, 430 residues long: Adenylosuccinate synthetase (430 aa).

GTP contacts are provided by residues 12–18 (GDEGKGK) and 40–42 (GHT). Aspartate 13 (proton acceptor) is an active-site residue. Aspartate 13 and glycine 40 together coordinate Mg(2+). IMP contacts are provided by residues 13–16 (DEGK), 38–41 (NAGH), threonine 128, arginine 142, glutamine 223, threonine 238, and arginine 302. Histidine 41 (proton donor) is an active-site residue. Substrate is bound at residue 298–304 (TTTGRPR). Residues arginine 304, 330–332 (SID), and 412–414 (SVG) each bind GTP.

The protein belongs to the adenylosuccinate synthetase family. As to quaternary structure, homodimer. Mg(2+) serves as cofactor.

The protein localises to the cytoplasm. It catalyses the reaction IMP + L-aspartate + GTP = N(6)-(1,2-dicarboxyethyl)-AMP + GDP + phosphate + 2 H(+). The protein operates within purine metabolism; AMP biosynthesis via de novo pathway; AMP from IMP: step 1/2. Plays an important role in the de novo pathway of purine nucleotide biosynthesis. Catalyzes the first committed step in the biosynthesis of AMP from IMP. The sequence is that of Adenylosuccinate synthetase from Streptococcus agalactiae serotype Ia (strain ATCC 27591 / A909 / CDC SS700).